The chain runs to 657 residues: Sodium/glucose cotransporter 4 (657 aa).

Residues 1–24 (MPASPEPVTATPEPEEVPAKFTLE) are Extracellular-facing. The chain crosses the membrane as a helical span at residues 25–45 (AADIAVVVVYFVFVLAVGIWS). Residues 46 to 79 (SIRANRGTVGGYFLAGRSMTWWPIGASLMSSNVG) are Cytoplasmic-facing. Residues 80 to 100 (SGLFIGLAGTGAAGGLAVGGF) traverse the membrane as a helical segment. Over 101 to 104 (EWNA) the chain is Extracellular. Residues 105–125 (AWVLIALGWIFVPVYISAGVV) traverse the membrane as a helical segment. At 126 to 147 (TMPEYLRKRFGGQRIRIYMSVL) the chain is on the cytoplasmic side. The chain crosses the membrane as a helical span at residues 148-168 (SLILYILTKISTDIFSGALFI). The Extracellular portion of the chain corresponds to 169–180 (QVSLGWDLYLST). A helical transmembrane segment spans residues 181-201 (VILLAVTALYTIAGGLTAVIY). Residues 202–207 (TDALQT) are Cytoplasmic-facing. A helical membrane pass occupies residues 208–228 (VIMVIGAFVLMFIAFDKVGWY). Residues 229–265 (EGLLVQYEKAAPALTVPNTTCHLPRSDAFHIFRDPVT) lie on the Extracellular side of the membrane. A glycan (N-linked (GlcNAc...) asparagine) is linked at Asn-246. Residues 266–286 (GDIPWPGLIFGLTVLATWVWC) traverse the membrane as a helical segment. The Cytoplasmic segment spans residues 287-307 (TDQVIVQRSLSAKNLSHAKAG). The chain crosses the membrane as a helical span at residues 308 to 328 (SVLGGYLKVFPMFFVVMPGMI). Topologically, residues 329-373 (SRALYPDEVACVDPDECQKICGAKVGCSNIAYPKLVVELMPVGMR) are extracellular. Residues 374 to 396 (GLMIAVMMAALMSSLTSIFNSSS) form a helical membrane-spanning segment. Residues 397 to 417 (TLFTMDIWQRIRPRASEKELM) lie on the Cytoplasmic side of the membrane. The helical transmembrane segment at 418-438 (VVGRVFILLLVALSIVWIPVI) threads the bilayer. Residues 439 to 451 (QTANSGQLFDYIQ) are Extracellular-facing. The helical transmembrane segment at 452 to 472 (AITSFLSPPITTVFIMAIFWG) threads the bilayer. Over 473–478 (RVNEQG) the chain is Cytoplasmic. Residues 479–499 (AFWGLMVGLVVGMVRMIMEFV) form a helical membrane-spanning segment. Residues 500-520 (YGTPSCGETDLRPSLLKDVHY) lie on the Extracellular side of the membrane. Residues 521–541 (LYFALILLALTVLIITAVSLC) traverse the membrane as a helical segment. Over 542–636 (TAPIPEKHLV…SIEEDHMWKT (95 aa)) the chain is Cytoplasmic. The chain crosses the membrane as a helical span at residues 637–657 (VCNVNALILLTANVFLWGYFA).

Belongs to the sodium:solute symporter (SSF) (TC 2.A.21) family.

Its subcellular location is the membrane. Its function is as follows. Probable sodium-dependent sugar transporter. In Danio rerio (Zebrafish), this protein is Sodium/glucose cotransporter 4 (slc5a9).